The following is a 178-amino-acid chain: Protein GrpE (178 aa).

Belongs to the GrpE family. As to quaternary structure, homodimer.

It is found in the cytoplasm. In terms of biological role, participates actively in the response to hyperosmotic and heat shock by preventing the aggregation of stress-denatured proteins, in association with DnaK and GrpE. It is the nucleotide exchange factor for DnaK and may function as a thermosensor. Unfolded proteins bind initially to DnaJ; upon interaction with the DnaJ-bound protein, DnaK hydrolyzes its bound ATP, resulting in the formation of a stable complex. GrpE releases ADP from DnaK; ATP binding to DnaK triggers the release of the substrate protein, thus completing the reaction cycle. Several rounds of ATP-dependent interactions between DnaJ, DnaK and GrpE are required for fully efficient folding. The polypeptide is Protein GrpE (Rickettsia typhi (strain ATCC VR-144 / Wilmington)).